Consider the following 444-residue polypeptide: Glutamyl-tRNA reductase (444 aa).

Substrate-binding positions include 49–52, S109, 114–116, and Q120; these read TCNR and ETQ. The Nucleophile role is filled by C50. 189–194 contributes to the NADP(+) binding site; sequence GAGKMG.

Belongs to the glutamyl-tRNA reductase family. Homodimer.

The enzyme catalyses (S)-4-amino-5-oxopentanoate + tRNA(Glu) + NADP(+) = L-glutamyl-tRNA(Glu) + NADPH + H(+). Its pathway is porphyrin-containing compound metabolism; protoporphyrin-IX biosynthesis; 5-aminolevulinate from L-glutamyl-tRNA(Glu): step 1/2. Functionally, catalyzes the NADPH-dependent reduction of glutamyl-tRNA(Glu) to glutamate 1-semialdehyde (GSA). The protein is Glutamyl-tRNA reductase of Bacillus cereus (strain G9842).